We begin with the raw amino-acid sequence, 911 residues long: Protein translocase subunit SecA (911 aa).

Residues Gln87, 105–109, and Asp512 contribute to the ATP site; that span reads GEGKT. Residues 861–880 are disordered; it reads APGLGSEQLSEEGAEVAVAS. Zn(2+) is bound by residues Cys895, Cys897, Cys906, and His907.

This sequence belongs to the SecA family. Monomer and homodimer. Part of the essential Sec protein translocation apparatus which comprises SecA, SecYEG and auxiliary proteins SecDF-YajC and YidC. Zn(2+) serves as cofactor.

It localises to the cell inner membrane. The protein localises to the cytoplasm. The enzyme catalyses ATP + H2O + cellular proteinSide 1 = ADP + phosphate + cellular proteinSide 2.. Functionally, part of the Sec protein translocase complex. Interacts with the SecYEG preprotein conducting channel. Has a central role in coupling the hydrolysis of ATP to the transfer of proteins into and across the cell membrane, serving both as a receptor for the preprotein-SecB complex and as an ATP-driven molecular motor driving the stepwise translocation of polypeptide chains across the membrane. This Pseudomonas putida (strain ATCC 47054 / DSM 6125 / CFBP 8728 / NCIMB 11950 / KT2440) protein is Protein translocase subunit SecA.